The following is a 391-amino-acid chain: Small ribosomal subunit protein bS1 (391 aa).

S1 motif domains are found at residues 16–90 (GDKV…LSRR), 108–173 (NEII…LSRK), 194–262 (GDVI…LSIK), and 279–348 (NDVI…LSIK).

This sequence belongs to the bacterial ribosomal protein bS1 family.

Binds mRNA; thus facilitating recognition of the initiation point. It is needed to translate mRNA with a short Shine-Dalgarno (SD) purine-rich sequence. The polypeptide is Small ribosomal subunit protein bS1 (rpsA) (Staphylococcus aureus (strain MSSA476)).